Reading from the N-terminus, the 411-residue chain is 2-acylphloroglucinol 4-prenyltransferase, chloroplastic (411 aa).

A chloroplast-targeting transit peptide spans 1-91 (MELSSVSSFS…CNDQRGNSIR (91 aa)). The next 8 membrane-spanning stretches (helical) occupy residues 159–179 (LLGM…NQIF), 198–218 (ISVE…FILI), 226–246 (LLTS…VPPF), 253–273 (ITAF…VYYA), 278–298 (LGLA…ITFM), 333–353 (LLGT…AIIW), 356–376 (AFKS…LIFQ), and 391–411 (KSFY…YLFI).

The protein belongs to the UbiA prenyltransferase family. Mg(2+) is required as a cofactor. As to expression, expressed in glandular trichomes called lupulin glands, and in early stage and mature cones. Detected in leaves, but not in root, stem and first stage of flowers. No expression in male flowers.

The protein localises to the plastid. The protein resides in the chloroplast membrane. It carries out the reaction a 2-acylphloroglucinol + dimethylallyl diphosphate = a 2-acyl-4-prenylphloroglucinol + diphosphate. The protein operates within secondary metabolite biosynthesis. Its function is as follows. Involved in the biosynthesis of prenylated phenolics natural products which contribute to the bitter taste of beer and display broad biological activities. Catalyzes the first prenylation step in the beta-bitter acid pathway. Abble to transfer dimethylallyl diphosphate (DMAPP) or geranyl diphosphate (GPP) to phlorisovalerophenone (PIVP), phlorisobutrylphenone (PIMP) and naringenin chalcone. Can also use phlorisobutyrophenone (PIBP) and phlormethylbutanophenone (PMBP) as substrates, but not 6'-O-methylated chalcone or naringenin. The polypeptide is 2-acylphloroglucinol 4-prenyltransferase, chloroplastic (Humulus lupulus (European hop)).